The sequence spans 531 residues: Peptide chain release factor 3 (531 aa).

The tr-type G domain maps to 13–282; sequence AKRRTFAIIS…TLIEHAPPPK (270 aa). GTP is bound by residues 22–29, 90–94, and 144–147; these read SHPDAGKT, DTPGH, and NKLD.

Belongs to the TRAFAC class translation factor GTPase superfamily. Classic translation factor GTPase family. PrfC subfamily.

Its subcellular location is the cytoplasm. Increases the formation of ribosomal termination complexes and stimulates activities of RF-1 and RF-2. It binds guanine nucleotides and has strong preference for UGA stop codons. It may interact directly with the ribosome. The stimulation of RF-1 and RF-2 is significantly reduced by GTP and GDP, but not by GMP. The polypeptide is Peptide chain release factor 3 (Psychrobacter sp. (strain PRwf-1)).